We begin with the raw amino-acid sequence, 423 residues long: MSAQCCAGQLACCCGSAGCSLCCDCCPRIRQSLSTRFMYALYFILVVVLCCIMMSTTVAHKMKEHIPFFEDMCKGIKAGDTCEKLVGYSAVYRVCFGMACFFFIFCLLTLKINNSKSCRAHIHNGFWFFKLLLLGAMCSGAFFIPDQDTFLNAWRYVGAVGGFLFIGIQLLLLVEFAHKWNKNWTAGTASNKLWYASLALVTLIMYSIATGGLVLMAVFYTQKDSCMENKILLGVNGGLCLLISLVAISPWVQNRQPHSGLLQSGVISCYVTYLTFSALSSKPAEVVLDEHGKNVTICVPDFGQDLYRDENLVTILGTSLLIGCILYSCLTSTTRSSSDALQGRYAAPELEIARCCFCFSPGGEDTEEQQPGKEGPRVIYDEKKGTVYIYSYFHFVFFLASLYVMMTVTNWFNHVRSAFHLLP.

At 1-36 the chain is on the extracellular side; that stretch reads MSAQCCAGQLACCCGSAGCSLCCDCCPRIRQSLSTR. A helical membrane pass occupies residues 37-57; sequence FMYALYFILVVVLCCIMMSTT. Residues 58–89 are Cytoplasmic-facing; the sequence is VAHKMKEHIPFFEDMCKGIKAGDTCEKLVGYS. A helical membrane pass occupies residues 90–110; that stretch reads AVYRVCFGMACFFFIFCLLTL. The Extracellular segment spans residues 111–124; it reads KINNSKSCRAHIHN. N-linked (GlcNAc...) asparagine glycosylation occurs at Asn-113. The chain crosses the membrane as a helical span at residues 125-145; sequence GFWFFKLLLLGAMCSGAFFIP. The Cytoplasmic portion of the chain corresponds to 146 to 156; it reads DQDTFLNAWRY. The chain crosses the membrane as a helical span at residues 157-177; sequence VGAVGGFLFIGIQLLLLVEFA. Topologically, residues 178 to 198 are extracellular; sequence HKWNKNWTAGTASNKLWYASL. Asn-183 is a glycosylation site (N-linked (GlcNAc...) asparagine). A helical membrane pass occupies residues 199–219; the sequence is ALVTLIMYSIATGGLVLMAVF. Residues 220 to 230 are Cytoplasmic-facing; that stretch reads YTQKDSCMENK. A helical transmembrane segment spans residues 231-251; that stretch reads ILLGVNGGLCLLISLVAISPW. The Extracellular portion of the chain corresponds to 252-258; that stretch reads VQNRQPH. A helical transmembrane segment spans residues 259–279; sequence SGLLQSGVISCYVTYLTFSAL. Over 280 to 311 the chain is Cytoplasmic; that stretch reads SSKPAEVVLDEHGKNVTICVPDFGQDLYRDEN. The helical transmembrane segment at 312–332 threads the bilayer; the sequence is LVTILGTSLLIGCILYSCLTS. The Extracellular portion of the chain corresponds to 333–385; sequence TTRSSSDALQGRYAAPELEIARCCFCFSPGGEDTEEQQPGKEGPRVIYDEKKG. Residues 386 to 406 traverse the membrane as a helical segment; the sequence is TVYIYSYFHFVFFLASLYVMM. Over 407–423 the chain is Cytoplasmic; sequence TVTNWFNHVRSAFHLLP.

This sequence belongs to the TDE1 family. As to expression, highly expressed in placenta, skeletal muscle, spleen, thymus, testis and peripheral leukocyte and is expressed weakly in the heart, liver and fetal brain.

It is found in the cell membrane. The protein localises to the cytoplasm. Its subcellular location is the perinuclear region. It carries out the reaction a 1,2-diacyl-sn-glycero-3-phospho-L-serine(in) = a 1,2-diacyl-sn-glycero-3-phospho-L-serine(out). It catalyses the reaction a 1,2-diacyl-sn-glycero-3-phosphocholine(in) = a 1,2-diacyl-sn-glycero-3-phosphocholine(out). The catalysed reaction is a 1,2-diacyl-sn-glycero-3-phosphoethanolamine(in) = a 1,2-diacyl-sn-glycero-3-phosphoethanolamine(out). In terms of biological role, restriction factor required to restrict infectivity of lentiviruses, such as HIV-1: acts by inhibiting an early step of viral infection. Impairs the penetration of the viral particle into the cytoplasm. Non-ATP-dependent, non-specific lipid transporter for phosphatidylserine, phosphatidylcholine, and phosphatidylethanolamine. Functions as a scramblase that flips lipids in both directions across the membrane. Phospholipid scrambling results in HIV-1 surface exposure of phosphatidylserine and loss of membrane asymmetry, which leads to changes in HIV-1 Env conformation and loss of infectivity. Enhances the incorporation of serine into phosphatidylserine and sphingolipids. May play a role in providing serine molecules for the formation of myelin glycosphingolipids in oligodendrocytes. The protein is Serine incorporator 5 of Homo sapiens (Human).